A 285-amino-acid chain; its full sequence is uncharacterized protein (285 aa).

A signal peptide spans 1–25; sequence MVKKWLIQFAVMLSVLSTFTYSASA.

This is an uncharacterized protein from Bacillus subtilis (strain 168).